Consider the following 233-residue polypeptide: Glucosamine-6-phosphate deaminase (233 aa).

Aspartate 62 functions as the Proton acceptor; for enolization step in the catalytic mechanism. The active-site For ring-opening step is the asparagine 128. Catalysis depends on histidine 130, which acts as the Proton acceptor; for ring-opening step. Residue glutamate 135 is the For ring-opening step of the active site.

The protein belongs to the glucosamine/galactosamine-6-phosphate isomerase family. NagB subfamily.

It carries out the reaction alpha-D-glucosamine 6-phosphate + H2O = beta-D-fructose 6-phosphate + NH4(+). The protein operates within amino-sugar metabolism; N-acetylneuraminate degradation; D-fructose 6-phosphate from N-acetylneuraminate: step 5/5. Functionally, catalyzes the reversible isomerization-deamination of glucosamine 6-phosphate (GlcN6P) to form fructose 6-phosphate (Fru6P) and ammonium ion. The protein is Glucosamine-6-phosphate deaminase of Streptococcus thermophilus (strain ATCC BAA-491 / LMD-9).